Reading from the N-terminus, the 122-residue chain is Large ribosomal subunit protein bL12 (122 aa).

Belongs to the bacterial ribosomal protein bL12 family. In terms of assembly, homodimer. Part of the ribosomal stalk of the 50S ribosomal subunit. Forms a multimeric L10(L12)X complex, where L10 forms an elongated spine to which 2 to 4 L12 dimers bind in a sequential fashion. Binds GTP-bound translation factors.

In terms of biological role, forms part of the ribosomal stalk which helps the ribosome interact with GTP-bound translation factors. Is thus essential for accurate translation. In Buchnera aphidicola subsp. Schizaphis graminum (strain Sg), this protein is Large ribosomal subunit protein bL12.